The sequence spans 509 residues: Ribonuclease Y (509 aa).

Residues 3–23 traverse the membrane as a helical segment; the sequence is IIFSSIFAGFILGFLIRVFLG. Positions 197–257 constitute a KH domain; the sequence is TVASVELPND…IRKELAKRTL (61 aa). An HD domain is found at 323 to 418; it reads VLSHSKETAI…VQIADAISAS (96 aa).

Belongs to the RNase Y family.

The protein localises to the cell membrane. Its function is as follows. Endoribonuclease that initiates mRNA decay. In Borreliella afzelii (strain PKo) (Borrelia afzelii), this protein is Ribonuclease Y.